The sequence spans 666 residues: ATP synthase subunit alpha 2 (666 aa).

Residue 182–189 (GDRATGKT) coordinates ATP. The interval 527 to 666 (MPAEDAAGDI…DAEAEARHKR (140 aa)) is disordered. Positions 545-590 (ARGDADRDADHGANREVSREVSPEASREVSREVSCEVSHEADRDAA) are enriched in basic and acidic residues. A compositionally biased stretch (low complexity) spans 591–601 (ADAARVAGRAP). Residues 623 to 641 (ADGDRASASRPRPDARGDA) are compositionally biased toward basic and acidic residues.

It belongs to the ATPase alpha/beta chains family. As to quaternary structure, F-type ATPases have 2 components, CF(1) - the catalytic core - and CF(0) - the membrane proton channel. CF(1) has five subunits: alpha(3), beta(3), gamma(1), delta(1), epsilon(1). CF(0) has three main subunits: a(1), b(2) and c(9-12). The alpha and beta chains form an alternating ring which encloses part of the gamma chain. CF(1) is attached to CF(0) by a central stalk formed by the gamma and epsilon chains, while a peripheral stalk is formed by the delta and b chains.

Its subcellular location is the cell inner membrane. It carries out the reaction ATP + H2O + 4 H(+)(in) = ADP + phosphate + 5 H(+)(out). Produces ATP from ADP in the presence of a proton gradient across the membrane. The alpha chain is a regulatory subunit. The polypeptide is ATP synthase subunit alpha 2 (Burkholderia pseudomallei (strain K96243)).